A 331-amino-acid polypeptide reads, in one-letter code: Nucleotide-binding protein SGR_5570 (331 aa).

The interval 1–43 (MTENTHETAPNTADTDTADFDTADTDRADGAADVSTNTPNETG) is disordered. Position 55–62 (55–62 (GMSGAGRS)) interacts with ATP. Residue 106–109 (DVRG) coordinates GTP.

This sequence belongs to the RapZ-like family.

Displays ATPase and GTPase activities. The polypeptide is Nucleotide-binding protein SGR_5570 (Streptomyces griseus subsp. griseus (strain JCM 4626 / CBS 651.72 / NBRC 13350 / KCC S-0626 / ISP 5235)).